The following is a 397-amino-acid chain: Purine ribonucleoside efflux pump NepI (397 aa).

The Cytoplasmic portion of the chain corresponds to 1–21; sequence MNENIAEKFRADGVARPNWSA. A helical membrane pass occupies residues 22-42; it reads VFAVAFCVACLITVEFLPVSL. Topologically, residues 43 to 54 are periplasmic; that stretch reads LTPMAQDLGISE. The helical transmembrane segment at 55 to 75 threads the bilayer; the sequence is GVAGQSVTVTAFVAMFSSLFI. The Cytoplasmic segment spans residues 76 to 85; it reads TQIIQATDRR. Residues 86–106 form a helical membrane-spanning segment; that stretch reads YIVILFAVLLTASCLMVSFAN. Position 107 (serine 107) is a topological domain, periplasmic. The helical transmembrane segment at 108 to 128 threads the bilayer; it reads FTLLLLGRACLGLALGGFWAM. At 129 to 147 the chain is on the cytoplasmic side; the sequence is SASLTMRLVPARTVPKALS. The helical transmembrane segment at 148–168 threads the bilayer; that stretch reads VIFGAVSIALVIAAPLGSFLG. Residues 169-175 are Periplasmic-facing; the sequence is GIIGWRN. Residues 176 to 196 form a helical membrane-spanning segment; that stretch reads VFNAAAVMGVLCVIWVVKSLP. Topologically, residues 197-215 are cytoplasmic; it reads SLPGEPSHQKQNMFSLLQR. The helical transmembrane segment at 216–236 threads the bilayer; that stretch reads PGVMAGMIAIFMSFAGQFAFF. The Periplasmic portion of the chain corresponds to 237 to 255; that stretch reads TYIRPVYMNLAGFDVDGLT. The chain crosses the membrane as a helical span at residues 256-276; it reads LVLLSFGIASFVGTSFSSYVL. The Cytoplasmic segment spans residues 277 to 281; that stretch reads KRSVK. A helical membrane pass occupies residues 282-302; the sequence is LALAGAPLLLALSALTLIVWG. At 303-305 the chain is on the periplasmic side; the sequence is SDK. A helical membrane pass occupies residues 306-326; the sequence is TVAAVIAIIWGLAFALVPVGW. The Cytoplasmic portion of the chain corresponds to 327 to 343; that stretch reads STWITRSLADQAEKAGS. A helical membrane pass occupies residues 344-364; the sequence is IQVAVIQLANTCGAAVGGYAL. Topologically, residues 365–366 are periplasmic; sequence DN. The helical transmembrane segment at 367–387 threads the bilayer; that stretch reads FGLLSPLALSGGLMLLTALVV. The Cytoplasmic segment spans residues 388–397; the sequence is AAKVRITPMS.

Belongs to the major facilitator superfamily. DHA1 family. NepI (TC 2.A.1.2.26) subfamily.

The protein localises to the cell inner membrane. It catalyses the reaction inosine(in) + H(+)(out) = inosine(out) + H(+)(in). The enzyme catalyses guanosine(in) + H(+)(out) = guanosine(out) + H(+)(in). Involved in the efflux of purine ribonucleosides, such as inosine and guanosine. In Salmonella paratyphi B (strain ATCC BAA-1250 / SPB7), this protein is Purine ribonucleoside efflux pump NepI.